The chain runs to 496 residues: Cobyric acid synthase (496 aa).

Residues 255–445 form the GATase cobBQ-type domain; it reads DLEIAVLKLP…LHGLLDNGPW (191 aa). Catalysis depends on Cys336, which acts as the Nucleophile. His437 is an active-site residue.

It belongs to the CobB/CobQ family. CobQ subfamily.

The protein operates within cofactor biosynthesis; adenosylcobalamin biosynthesis. Catalyzes amidations at positions B, D, E, and G on adenosylcobyrinic A,C-diamide. NH(2) groups are provided by glutamine, and one molecule of ATP is hydrogenolyzed for each amidation. This Parasynechococcus marenigrum (strain WH8102) protein is Cobyric acid synthase.